Here is a 522-residue protein sequence, read N- to C-terminus: Serine/threonine protein phosphatase 2A 59 kDa regulatory subunit B' gamma isoform (522 aa).

The tract at residues 1–74 (MIKQIFGKLP…SSTSSNRTNQ (74 aa)) is disordered. A compositionally biased stretch (low complexity) spans 35 to 58 (PNSGISSISKPSSKSSASNSNGAN). Residues 63 to 74 (APSSTSSNRTNQ) are compositionally biased toward polar residues.

Belongs to the phosphatase 2A regulatory subunit B56 family. PP2A consists of a common heteromeric enzyme, composed of a catalytic subunit (subunits C), a constant regulatory subunit (subunit A), and a variety of regulatory subunits such as subunits B (the R2/B/PR55/B55, R3/B''/PR72/PR130/PR59 and R5/B'/B56 families). Interacts with BRI1. Interacts with IGMT1 and IGMT4. Interacts with ACO3 in the cytosol. As to expression, expressed ubiquitously at low levels. Expressed in roots, emerging lateral roots, cotyledons, leaves, floral stalks and flowers.

It is found in the cytoplasm. The protein resides in the cytosol. The protein localises to the nucleus. Its function is as follows. The B regulatory subunit may modulate substrate selectivity and catalytic activity, and may also direct the localization of the catalytic enzyme to a particular subcellular compartment. Required for the formation of the PP2A holoenzyme that negatively regulates brassinosteroid signaling by dephosphorylating and inactivating BRI1 in the cytoplasm. Seems to be functionally connected with CPR5 and may mediate the negative regulation of defense reactions and senescence under low irradiances. May contribute to the epigenetic regulation of defense gene expression. Involved in the control of methoxylation of indole glucosinolates and formation of 4-methoxy- indol-3-yl-methyl glucosinolate in leaves, through direct interaction with indole glucosinolate methyltransferases. Involved in growth regulation and stress signaling. Involved in the regulation of reactive oxygen species (ROS) signaling and maintenance of cellular ROS homeostasis. Required to control the level of ACO3 phosphorylation in the cytoplasm. Regulates hydrogen peroxide metabolism by controlling the abundance of AOX1A and AXO3/AOX1D in leaf mitochondria. May mediate dephosphorylation of CRT1 and promote the degradation of unfolded proteins in endoplasmic reticulum (ER). Involved in the regulation of flowering time by repressing FLC, the main flowering repressor gene. The sequence is that of Serine/threonine protein phosphatase 2A 59 kDa regulatory subunit B' gamma isoform (B'GAMMA) from Arabidopsis thaliana (Mouse-ear cress).